The chain runs to 273 residues: Probable nicotinate-nucleotide pyrophosphorylase [carboxylating] (273 aa).

Residues R91, 124 to 126 (TRK), R148, K158, E188, D209, 235 to 237 (SGN), and 256 to 258 (VGA) contribute to the substrate site.

The protein belongs to the NadC/ModD family. As to quaternary structure, hexamer formed by 3 homodimers.

The enzyme catalyses nicotinate beta-D-ribonucleotide + CO2 + diphosphate = quinolinate + 5-phospho-alpha-D-ribose 1-diphosphate + 2 H(+). It functions in the pathway cofactor biosynthesis; NAD(+) biosynthesis; nicotinate D-ribonucleotide from quinolinate: step 1/1. Involved in the catabolism of quinolinic acid (QA). The protein is Probable nicotinate-nucleotide pyrophosphorylase [carboxylating] (nadC) of Helicobacter pylori (strain ATCC 700392 / 26695) (Campylobacter pylori).